We begin with the raw amino-acid sequence, 257 residues long: Taurine import ATP-binding protein TauB (257 aa).

An ABC transporter domain is found at 6–233 (LDKISIHYDG…RYAAGEPIRA (228 aa)). 38–45 (GRSGCGKT) lines the ATP pocket.

The protein belongs to the ABC transporter superfamily. Taurine importer (TC 3.A.1.17.1) family. In terms of assembly, the complex is composed of two ATP-binding proteins (TauB), two transmembrane proteins (TauC) and a solute-binding protein (TauA).

It is found in the cell inner membrane. It carries out the reaction taurine(out) + ATP + H2O = taurine(in) + ADP + phosphate + H(+). In terms of biological role, part of the ABC transporter complex TauABC involved in taurine import. Responsible for energy coupling to the transport system. The sequence is that of Taurine import ATP-binding protein TauB from Mesorhizobium japonicum (strain LMG 29417 / CECT 9101 / MAFF 303099) (Mesorhizobium loti (strain MAFF 303099)).